The sequence spans 372 residues: Fatty acid conjugase FAC2 B (372 aa).

A run of 2 helical transmembrane segments spans residues 44-64 (YFLFHDIIVTCILFYVASNYI) and 74-94 (IVWPVYWISQGVFLGRLWMIG). The Histidine box-1 signature appears at 95–99 (HECGH). Positions 131 to 135 (HRNHH) match the Histidine box-2 motif. Helical transmembrane passes span 166–186 (IGLMITMLCKLTFGYAAYIMF), 217–237 (VLFSDIGICIVLYACYRIVTV), and 240–260 (AMPAFYVYGIPWVIMSAILFA). Residues 304 to 308 (HVIHH) carry the Histidine box-3 motif.

This sequence belongs to the fatty acid desaturase type 1 family. Expressed exclusively in the developing seeds. Not detected in leaves.

The protein localises to the microsome membrane. The enzyme catalyses a (9Z,12Z)-octadecadienoyl-containing glycerolipid + AH2 + O2 = a (8E,10E,12Z)-octadecatrienoyl-containing glycerolipid + A + 2 H2O. Its pathway is lipid metabolism; polyunsaturated fatty acid biosynthesis. Functionally, fatty acid conjugase converting 18:2(9Z, 12Z) to calendic acid 18:3(8E, 10E, 12Z). Converts alpha-linolenic acid (18:3(9Z, 12Z, 15Z)) into 18:4(8E, 10E, 12Z, 15Z). Also has weak activity on the mono-unsaturates 16:1(9Z) and 18:1(9Z) producing two conjugated double bonds at delta(8) and delta(10) position. The sequence is that of Fatty acid conjugase FAC2 B from Calendula officinalis (Pot marigold).